A 579-amino-acid polypeptide reads, in one-letter code: Nif-specific regulatory protein (579 aa).

One can recognise a GAF domain in the interval 40 to 187 (DPVAEVPQIF…MVASLLEQAL (148 aa)). A Sigma-54 factor interaction domain is found at 226 to 454 (IVGSSPAIAE…LENCVNRAAA (229 aa)). ATP-binding positions include 254–261 (GESGTGKE) and 317–326 (ADGGTLFLDE). Residues 464–536 (EELACRQGAC…PLRTKTAQLS (73 aa)) are inter-domain linker. A divalent metal cation is bound by residues Cys468 and Cys473. The segment at 502-529 (RVSAPPPEPAPAPEPAPEAPPREEVPLR) is disordered. 7 repeat units span residues 505-506 (AP), 507-508 (PP), 509-510 (EP), 511-512 (AP), 513-514 (AP), 515-516 (EP), and 517-518 (AP). The 7 X 2 AA tandem repeats of X-P stretch occupies residues 505 to 518 (APPPEPAPAPEPAP). The span at 505–520 (APPPEPAPAPEPAPEA) shows a compositional bias: pro residues. The segment at 537-579 (REELLRALESAGWVQAKAARLLGMTPRQIAYALQKFEIELRKI) is C-terminal DNA-binding domain. The segment at residues 551–570 (QAKAARLLGMTPRQIAYALQ) is a DNA-binding region (H-T-H motif).

As to quaternary structure, interacts with sigma-54.

Required for activation of most nif operons, which are directly involved in nitrogen fixation. The chain is Nif-specific regulatory protein (nifA1) from Rhodobacter capsulatus (strain ATCC BAA-309 / NBRC 16581 / SB1003).